The sequence spans 352 residues: C-glycoside deglycosidase alpha subunit (352 aa).

Glu147 is a Mn(2+) binding site. The Proton acceptor role is filled by His149. The Mn(2+) site is built by Asp179, His269, and Glu305.

Belongs to the C-glycoside deglycosidase alpha subunit family. As to quaternary structure, heterodimer composed of an alpha subunit (CarB2) and a beta subunit (CarC2). The cofactor is a divalent metal cation.

The catalysed reaction is 3''-dehydroorientin = 1,5-anhydro-D-erythro-hex-1-en-3-ulose + luteolin. Its activity is regulated as follows. Activity is strongly reduced in the presence of chelating agents. Carbon-carbon bond-cleaving enzyme which participates in the metabolism of C-glycosides. Acts on the C8-glycosylated compound 3''-dehydroorientin (3''-oxo-orientin). This chain is C-glycoside deglycosidase alpha subunit, found in Arthrobacter globiformis (strain ATCC 8010 / DSM 20124 / JCM 1332 / NBRC 12137 / NCIMB 8907 / NRRL B-2979 / 168).